The primary structure comprises 479 residues: Bifunctional NAD(P)H-hydrate repair enzyme Nnr (479 aa).

Residues 1–214 are NAD(P)H-hydrate epimerase; the sequence is MTVIIQGRSF…GIGIPLLAEI (214 aa). The YjeF N-terminal domain maps to 31 to 214; that stretch reads MRRIDQNAQA…GIGIPLLAEI (184 aa). The interval 76-80 is NADPHX 1; for epimerase activity; that stretch reads NNGGD. Asn77 and Asp146 together coordinate K(+). Positions 150–156 are NADPHX 1; for epimerase activity; the sequence is GTGGTGS. Residue Asp179 coordinates (6S)-NADPHX. Ser182 contacts K(+). In terms of domain architecture, YjeF C-terminal spans 216–474; that stretch reads TGPGDLLILR…TAVPQVLFRS (259 aa). Residues 216–479 are ADP-dependent (S)-NAD(P)H-hydrate dehydratase; sequence TGPGDLLILR…VLFRSTSERE (264 aa). Gly312 contributes to the (6S)-NADPHX binding site. Residues 353–359 form an NADPHX 2; for dehydratase activity region; it reads HAGEFAR. Residues 388-392 and 407-416 contribute to the ADP site; these read KGAVD and TPAMTTGGTG. Asp417 contacts (6S)-NADPHX.

In the N-terminal section; belongs to the NnrE/AIBP family. This sequence in the C-terminal section; belongs to the NnrD/CARKD family. The cofactor is K(+).

It carries out the reaction (6S)-NADHX + ADP = AMP + phosphate + NADH + H(+). The enzyme catalyses (6S)-NADPHX + ADP = AMP + phosphate + NADPH + H(+). It catalyses the reaction (6R)-NADHX = (6S)-NADHX. The catalysed reaction is (6R)-NADPHX = (6S)-NADPHX. Functionally, bifunctional enzyme that catalyzes the epimerization of the S- and R-forms of NAD(P)HX and the dehydration of the S-form of NAD(P)HX at the expense of ADP, which is converted to AMP. This allows the repair of both epimers of NAD(P)HX, a damaged form of NAD(P)H that is a result of enzymatic or heat-dependent hydration. This chain is Bifunctional NAD(P)H-hydrate repair enzyme Nnr (nnr), found in Methanospirillum hungatei JF-1 (strain ATCC 27890 / DSM 864 / NBRC 100397 / JF-1).